A 157-amino-acid polypeptide reads, in one-letter code: Small ribosomal subunit protein uS7 (157 aa).

The protein belongs to the universal ribosomal protein uS7 family. In terms of assembly, part of the 30S ribosomal subunit. Contacts proteins S9 and S11.

Functionally, one of the primary rRNA binding proteins, it binds directly to 16S rRNA where it nucleates assembly of the head domain of the 30S subunit. Is located at the subunit interface close to the decoding center, probably blocks exit of the E-site tRNA. The polypeptide is Small ribosomal subunit protein uS7 (Marinomonas sp. (strain MWYL1)).